The sequence spans 498 residues: NAC domain-containing protein 75 (498 aa).

One can recognise an NAC domain in the interval 48–215 (LPAGVKFDPT…ELVVSKIFYQ (168 aa)). The DNA-binding element occupies 166–221 (KGCKKILVLYTNFGKNRKPEKTNWVMHQYHLGTHEEEKEGELVVSKIFYQTQPRQC). Disordered regions lie at residues 225–278 (SSTS…PNRS), 338–374 (VMAEQHRHRHQPSSSTSHHMAHDHHHHHHQQQQQRHH), 423–443 (QQQLRQEGEEEHNDGKMGGRS), and 457–498 (STTH…DHHG). A compositionally biased stretch (gly residues) spans 233–248 (IGGGGGEASSGGGGGE). Residues 256–266 (GTTSGGSCSSS) show a composition bias toward low complexity. Basic residues predominate over residues 356-374 (HMAHDHHHHHHQQQQQRHH). Residues 466–475 (GSSSMGNQQE) are compositionally biased toward polar residues.

In terms of tissue distribution, expressed in the vascular cylinder of roots. Expressed in the differentiation zone of the root stele.

Its subcellular location is the nucleus. Its function is as follows. Transcription activator involved in xylem formation. Promotes the expression of the secondary wall-associated transcription factor MYB46. Functions upstream of NAC030/VND7, a master switch of xylem vessel differentiation. Acts as a upstream regulator of NAC101/VND6 and LBD30/ASL19. This is NAC domain-containing protein 75 from Arabidopsis thaliana (Mouse-ear cress).